The primary structure comprises 394 residues: MVGNTFGRIFRVTTCGESYAGAFRKNLQIPKELFGGLIAIVDGVPPGIKLTADFVQEELDKRRPGKTPLDTPRKERDKVYIFSGVMEDDITTGAPVGMIIPNDVIEDEHINKHKSYKEVVRPGQAGYTFFKKYGQFADNIGAGRASGRETAARVAAGAVAKAVLDTMGIDVIAFVTEIHGIKAQENITYEMAKANYRKNEINCPDLEKAKEMIEELKRIKEEGDSVGGVVEIIARGVPAGLGEPVFDKLQATLAHALMSIGAIKGIEFGEGFGHTKLKGSESNDVPYYDEASGRVRFKTNRAGGILGGISNGEDIRIRVAVKPTPTISIPQKTVNMYTLENVEVEFNTRNDPSICPRIYPVCEAMVRIALLDALYIAKGYRAISSNIDPRWDRL.

Arg62 serves as a coordination point for NADP(+). Residues 144 to 146, Gly307, 322 to 326, and Arg349 contribute to the FMN site; these read RAS and KPTPT.

Belongs to the chorismate synthase family. In terms of assembly, homotetramer. Requires FMNH2 as cofactor.

The enzyme catalyses 5-O-(1-carboxyvinyl)-3-phosphoshikimate = chorismate + phosphate. It participates in metabolic intermediate biosynthesis; chorismate biosynthesis; chorismate from D-erythrose 4-phosphate and phosphoenolpyruvate: step 7/7. Functionally, catalyzes the anti-1,4-elimination of the C-3 phosphate and the C-6 proR hydrogen from 5-enolpyruvylshikimate-3-phosphate (EPSP) to yield chorismate, which is the branch point compound that serves as the starting substrate for the three terminal pathways of aromatic amino acid biosynthesis. This reaction introduces a second double bond into the aromatic ring system. The chain is Chorismate synthase from Acetivibrio thermocellus (strain ATCC 27405 / DSM 1237 / JCM 9322 / NBRC 103400 / NCIMB 10682 / NRRL B-4536 / VPI 7372) (Clostridium thermocellum).